A 192-amino-acid chain; its full sequence is Vascular endothelial growth factor A (192 aa).

The signal sequence occupies residues M1 to A26. 3 cysteine pairs are disulfide-bonded: C52–C94, C83–C128, and C87–C130. A glycan (N-linked (GlcNAc...) asparagine) is linked at N101.

The protein belongs to the PDGF/VEGF growth factor family. Homodimer; disulfide-linked. Also found as heterodimer with PGF. Interacts with FLT1/VEGFR1 and KDR/VEGFR2 receptors, heparan sulfate and heparin. As to expression, expressed by the venom gland, and probably other tissues.

It is found in the secreted. Growth factor active in angiogenesis, vasculogenesis and endothelial cell growth. Induces endothelial cell proliferation, promotes cell migration, inhibits apoptosis and induces permeabilization of blood vessels. The protein is Vascular endothelial growth factor A of Agkistrodon piscivorus piscivorus (Eastern cottonmouth).